The chain runs to 214 residues: Predicted GPI-anchored protein 57 (214 aa).

The N-terminal stretch at 1–18 (MLFTQLIILFTFISQIIC) is a signal peptide. Positions 36–101 (RGSSGHSSGG…SSGSSSGSRN (66 aa)) are disordered. Positions 42–60 (SSGGGHSSSGSHSSGGGHS) are enriched in gly residues. Over residues 76–85 (SGSSSGSSSG) the composition is skewed to low complexity. An N-linked (GlcNAc...) asparagine glycan is attached at N182. Residue G191 is the site of GPI-anchor amidated glycine attachment. A propeptide spans 192-214 (VSLNIPSTHFYVIGLAAAYSIVL) (removed in mature form).

It belongs to the PGA37 family.

Its subcellular location is the secreted. The protein localises to the cell membrane. In terms of biological role, predicted GPI-anchored protein which may have a role during host infection. This chain is Predicted GPI-anchored protein 57 (PGA57), found in Candida albicans (strain SC5314 / ATCC MYA-2876) (Yeast).